A 339-amino-acid chain; its full sequence is DNA-directed RNA polymerase subunit alpha (339 aa).

Residues methionine 1 to glutamate 235 are alpha N-terminal domain (alpha-NTD). The alpha C-terminal domain (alpha-CTD) stretch occupies residues phenylalanine 251–tyrosine 339.

Belongs to the RNA polymerase alpha chain family. As to quaternary structure, homodimer. The RNAP catalytic core consists of 2 alpha, 1 beta, 1 beta' and 1 omega subunit. When a sigma factor is associated with the core the holoenzyme is formed, which can initiate transcription.

The catalysed reaction is RNA(n) + a ribonucleoside 5'-triphosphate = RNA(n+1) + diphosphate. DNA-dependent RNA polymerase catalyzes the transcription of DNA into RNA using the four ribonucleoside triphosphates as substrates. The sequence is that of DNA-directed RNA polymerase subunit alpha from Afipia carboxidovorans (strain ATCC 49405 / DSM 1227 / KCTC 32145 / OM5) (Oligotropha carboxidovorans).